The primary structure comprises 471 residues: Siroheme synthase 1 (471 aa).

The interval 1–203 (MDYLPLFAEL…GNSAEAEKAL (203 aa)) is precorrin-2 dehydrogenase /sirohydrochlorin ferrochelatase. Residues 22-23 (EI) and 43-44 (ET) each bind NAD(+). Serine 128 is subject to Phosphoserine. The segment at 215–471 (GEIILVGAGP…GFNASVVNLA (257 aa)) is uroporphyrinogen-III C-methyltransferase. Residue proline 224 coordinates S-adenosyl-L-methionine. The active-site Proton acceptor is the aspartate 247. The active-site Proton donor is the lysine 269. S-adenosyl-L-methionine is bound by residues 300-302 (GGD), isoleucine 305, 330-331 (TA), methionine 382, and glycine 411.

It in the N-terminal section; belongs to the precorrin-2 dehydrogenase / sirohydrochlorin ferrochelatase family. This sequence in the C-terminal section; belongs to the precorrin methyltransferase family.

It catalyses the reaction uroporphyrinogen III + 2 S-adenosyl-L-methionine = precorrin-2 + 2 S-adenosyl-L-homocysteine + H(+). The enzyme catalyses precorrin-2 + NAD(+) = sirohydrochlorin + NADH + 2 H(+). It carries out the reaction siroheme + 2 H(+) = sirohydrochlorin + Fe(2+). It functions in the pathway cofactor biosynthesis; adenosylcobalamin biosynthesis; precorrin-2 from uroporphyrinogen III: step 1/1. The protein operates within cofactor biosynthesis; adenosylcobalamin biosynthesis; sirohydrochlorin from precorrin-2: step 1/1. Its pathway is porphyrin-containing compound metabolism; siroheme biosynthesis; precorrin-2 from uroporphyrinogen III: step 1/1. It participates in porphyrin-containing compound metabolism; siroheme biosynthesis; siroheme from sirohydrochlorin: step 1/1. It functions in the pathway porphyrin-containing compound metabolism; siroheme biosynthesis; sirohydrochlorin from precorrin-2: step 1/1. Functionally, multifunctional enzyme that catalyzes the SAM-dependent methylations of uroporphyrinogen III at position C-2 and C-7 to form precorrin-2 via precorrin-1. Then it catalyzes the NAD-dependent ring dehydrogenation of precorrin-2 to yield sirohydrochlorin. Finally, it catalyzes the ferrochelation of sirohydrochlorin to yield siroheme. The polypeptide is Siroheme synthase 1 (Klebsiella pneumoniae subsp. pneumoniae (strain ATCC 700721 / MGH 78578)).